Consider the following 178-residue polypeptide: Crossover junction endodeoxyribonuclease RuvC (178 aa).

Active-site residues include Asp11, Glu71, and Asp143. Mg(2+)-binding residues include Asp11, Glu71, and Asp143.

It belongs to the RuvC family. In terms of assembly, homodimer which binds Holliday junction (HJ) DNA. The HJ becomes 2-fold symmetrical on binding to RuvC with unstacked arms; it has a different conformation from HJ DNA in complex with RuvA. In the full resolvosome a probable DNA-RuvA(4)-RuvB(12)-RuvC(2) complex forms which resolves the HJ. Mg(2+) is required as a cofactor.

The protein resides in the cytoplasm. It carries out the reaction Endonucleolytic cleavage at a junction such as a reciprocal single-stranded crossover between two homologous DNA duplexes (Holliday junction).. Functionally, the RuvA-RuvB-RuvC complex processes Holliday junction (HJ) DNA during genetic recombination and DNA repair. Endonuclease that resolves HJ intermediates. Cleaves cruciform DNA by making single-stranded nicks across the HJ at symmetrical positions within the homologous arms, yielding a 5'-phosphate and a 3'-hydroxyl group; requires a central core of homology in the junction. The consensus cleavage sequence is 5'-(A/T)TT(C/G)-3'. Cleavage occurs on the 3'-side of the TT dinucleotide at the point of strand exchange. HJ branch migration catalyzed by RuvA-RuvB allows RuvC to scan DNA until it finds its consensus sequence, where it cleaves and resolves the cruciform DNA. This chain is Crossover junction endodeoxyribonuclease RuvC, found in Neisseria meningitidis serogroup C / serotype 2a (strain ATCC 700532 / DSM 15464 / FAM18).